The chain runs to 141 residues: Cholinesterase (141 aa).

N-linked (GlcNAc...) asparagine glycosylation is present at Asn39. Residue 49 to 50 (GG) participates in substrate binding. The Acyl-ester intermediate role is filled by Ser131. Ser131 is modified (phosphoserine).

The protein belongs to the type-B carboxylesterase/lipase family. Homotetramer; disulfide-linked. Dimer of dimers. In terms of tissue distribution, present in most cells except erythrocytes.

The protein localises to the secreted. The catalysed reaction is an acylcholine + H2O = a carboxylate + choline + H(+). In terms of biological role, esterase with broad substrate specificity. Contributes to the inactivation of the neurotransmitter acetylcholine. Can degrade neurotoxic organophosphate esters. The protein is Cholinesterase (BCHE) of Canis lupus familiaris (Dog).